An 88-amino-acid chain; its full sequence is Small ribosomal subunit protein bS16c (88 aa).

This sequence belongs to the bacterial ribosomal protein bS16 family.

Its subcellular location is the plastid. It is found in the chloroplast. This is Small ribosomal subunit protein bS16c from Solanum bulbocastanum (Wild potato).